A 752-amino-acid chain; its full sequence is Complement C2 (752 aa).

The signal sequence occupies residues 1–20 (MGPLMVLFCLLFLYPGLADS). Sushi domains lie at 22–86 (PSCP…VCKP), 87–146 (VRCP…VCDN), and 149–206 (GHCP…ICRQ). 6 disulfides stabilise this stretch: C24/C64, C51/C84, C89/C131, C117/C144, C151/C191, and C177/C204. N29 carries N-linked (GlcNAc...) asparagine glycosylation. The N-linked (GlcNAc...) asparagine glycan is linked to N112. In terms of domain architecture, VWFA spans 254–452 (NLYLLLDCSQ…KALHQVFEHM (199 aa)). The MIDAS-like motif motif lies at 260 to 264 (DCSQS). Mg(2+) contacts are provided by S262 and S264. Residues N290 and N333 are each glycosylated (N-linked (GlcNAc...) asparagine). T337 is a Mg(2+) binding site. 3 cysteine pairs are disulfide-bonded: C463–C581, C492–C508, and C584–C600. The region spanning 464-744 (GVGNMSANAS…MQPWLRQHLG (281 aa)) is the Peptidase S1 domain. 2 N-linked (GlcNAc...) asparagine glycosylation sites follow: N467 and N471. Catalysis depends on charge relay system residues H507 and D561. N-linked (GlcNAc...) asparagine glycosylation is found at N621 and N651. Cystine bridges form between C638–C665 and C675–C705. S679 (charge relay system) is an active-site residue.

The protein belongs to the peptidase S1 family. In terms of assembly, serine protease component of the C3 convertase, also named C4bC2b, composed of the serine protease complement C2b and complement C4b. Serine protease component of the C5 convertase, also named C4bC2bC3b, composed of the serine protease complement C2b, complement C3b, as well as complement C4b. The cofactor is Mg(2+). Mn(2+) is required as a cofactor. In terms of processing, cleaved and activated by different proteases depending on the complement pathway to generate complement C2a and serine protease complement C2b chains. Cleaved and activated by C1S following activation by the classical complement system. Cleaved and activated by MASP2 following activation by the lectin complement system. Cleaved and activated by GZMK following activation by the GZMK complement system.

The protein resides in the secreted. The protein localises to the cell surface. The enzyme catalyses Selective cleavage of Arg-|-Ser bond in complement component C3 alpha-chain to form C3a and C3b, and Arg-|-Xaa bond in complement component C5 alpha-chain to form C5a and C5b.. Its function is as follows. Precursor of the catalytic component of the C3 and C5 convertase complexes, which are part of the complement pathway, a cascade of proteins that leads to phagocytosis and breakdown of pathogens and signaling that strengthens the adaptive immune system. Component C2 is part of the classical, lectin and GZMK complement systems. In terms of biological role, catalytic component of the complement C3 and C5 convertase complexes. Following complement activation, recruited to the surface of pathogens by complement C4b opsonin to form the C3 convertase, or C3b and C4b opsonins to form the C5 convertase. As part of the C3 convertase, cleaves and activate C3 into C3a anaphylatoxin and C3b opsonin, the next components of the complement pathways. As part of the C5 convertase, cleaves and activate C5 into C5a anaphylatoxin and C5b component of the membrane attack complex. The protein is Complement C2 of Pan troglodytes (Chimpanzee).